Consider the following 332-residue polypeptide: Glycerol-3-phosphate dehydrogenase [NAD(P)+] (332 aa).

Residues Ser-14, Trp-15, Arg-35, and Lys-107 each coordinate NADPH. Positions 107, 137, and 139 each coordinate sn-glycerol 3-phosphate. Ala-141 is a binding site for NADPH. Positions 192, 245, 255, 256, and 257 each coordinate sn-glycerol 3-phosphate. Residue Lys-192 is the Proton acceptor of the active site. Residue Arg-256 coordinates NADPH. NADPH is bound by residues Val-280 and Glu-282.

The protein belongs to the NAD-dependent glycerol-3-phosphate dehydrogenase family.

It is found in the cytoplasm. The catalysed reaction is sn-glycerol 3-phosphate + NAD(+) = dihydroxyacetone phosphate + NADH + H(+). The enzyme catalyses sn-glycerol 3-phosphate + NADP(+) = dihydroxyacetone phosphate + NADPH + H(+). It participates in membrane lipid metabolism; glycerophospholipid metabolism. Catalyzes the reduction of the glycolytic intermediate dihydroxyacetone phosphate (DHAP) to sn-glycerol 3-phosphate (G3P), the key precursor for phospholipid synthesis. This Desulfovibrio desulfuricans (strain ATCC 27774 / DSM 6949 / MB) protein is Glycerol-3-phosphate dehydrogenase [NAD(P)+].